Consider the following 102-residue polypeptide: Large ribosomal subunit protein bL21 (102 aa).

Belongs to the bacterial ribosomal protein bL21 family. In terms of assembly, part of the 50S ribosomal subunit. Contacts protein L20.

Functionally, this protein binds to 23S rRNA in the presence of protein L20. This chain is Large ribosomal subunit protein bL21, found in Agathobacter rectalis (strain ATCC 33656 / DSM 3377 / JCM 17463 / KCTC 5835 / VPI 0990) (Eubacterium rectale).